Consider the following 69-residue polypeptide: Probable Sec-independent protein translocase protein TatE (69 aa).

A helical membrane pass occupies residues Met-1–Gly-21. The disordered stretch occupies residues Asp-45–Glu-69. Residues Ala-54–Glu-69 are compositionally biased toward basic and acidic residues.

It belongs to the TatA/E family. TatE subfamily.

The protein localises to the cell inner membrane. Part of the twin-arginine translocation (Tat) system that transports large folded proteins containing a characteristic twin-arginine motif in their signal peptide across membranes. TatE shares overlapping functions with TatA. This chain is Probable Sec-independent protein translocase protein TatE, found in Dickeya chrysanthemi (strain Ech1591) (Dickeya zeae (strain Ech1591)).